The following is a 492-amino-acid chain: NADH-quinone oxidoreductase subunit N 2 (492 aa).

14 helical membrane-spanning segments follow: residues 16-36 (ILPEIVLAVFGIVVMMADALI), 44-64 (PLGYLSLIGVLVSLGAIACQA), 87-107 (FSLFFHVLIALITAAVLLVSF), 118-138 (GEYYAIILFSALGMMLMTSAT), 140-160 (LVLIFIALEISSIGSYVLAAM), 175-195 (FLLGSFATAFFLYGVALIFGA), 216-236 (PIIYLAVALMFIGLGFKVAAA), 250-270 (PSPIVALMSTGPKAAAFAVLL), 282-302 (FWIVWVSAALSMTIGNIGALV), 309-329 (LLAYSSIAHAGYMLVAFAAAK), 333-353 (ISAAIFYTATYAAMNVGAFAV), 381-401 (AAILTVFLLSLIGIPVTGGFF), 416-438 (VWLTIIGVINSAVGAYYYLRIIV), and 455-475 (PFGLALALAMCLMFTIYLGVL).

Belongs to the complex I subunit 2 family. NDH-1 is composed of 14 different subunits. Subunits NuoA, H, J, K, L, M, N constitute the membrane sector of the complex.

It localises to the cell inner membrane. The catalysed reaction is a quinone + NADH + 5 H(+)(in) = a quinol + NAD(+) + 4 H(+)(out). Its function is as follows. NDH-1 shuttles electrons from NADH, via FMN and iron-sulfur (Fe-S) centers, to quinones in the respiratory chain. The immediate electron acceptor for the enzyme in this species is believed to be ubiquinone. Couples the redox reaction to proton translocation (for every two electrons transferred, four hydrogen ions are translocated across the cytoplasmic membrane), and thus conserves the redox energy in a proton gradient. In Koribacter versatilis (strain Ellin345), this protein is NADH-quinone oxidoreductase subunit N 2.